The following is a 392-amino-acid chain: uncharacterized protein (392 aa).

10 consecutive transmembrane segments (helical) span residues 2-23 (WLAN…SLYI), 38-60 (SGYV…GRFG), 73-95 (GTGI…LFFL), 153-175 (FTYT…LFGV), 195-217 (VLSY…LIQT), 237-259 (VNLA…LLAR), 272-291 (RILI…QALA), 297-319 (LLVF…TAAI), 331-353 (VLGY…GGII), and 357-379 (FTIS…MLWI).

The protein belongs to the major facilitator superfamily.

The protein localises to the cell membrane. This is an uncharacterized protein from Bacillus subtilis (strain 168).